Here is a 141-residue protein sequence, read N- to C-terminus: Large ribosomal subunit protein uL11 (141 aa).

It belongs to the universal ribosomal protein uL11 family. In terms of assembly, part of the ribosomal stalk of the 50S ribosomal subunit. Interacts with L10 and the large rRNA to form the base of the stalk. L10 forms an elongated spine to which L12 dimers bind in a sequential fashion forming a multimeric L10(L12)X complex. In terms of processing, one or more lysine residues are methylated.

Forms part of the ribosomal stalk which helps the ribosome interact with GTP-bound translation factors. This chain is Large ribosomal subunit protein uL11, found in Chlamydia pneumoniae (Chlamydophila pneumoniae).